The sequence spans 179 residues: Large ribosomal subunit protein uL6 (179 aa).

It belongs to the universal ribosomal protein uL6 family. In terms of assembly, part of the 50S ribosomal subunit.

This protein binds to the 23S rRNA, and is important in its secondary structure. It is located near the subunit interface in the base of the L7/L12 stalk, and near the tRNA binding site of the peptidyltransferase center. This is Large ribosomal subunit protein uL6 from Syntrophotalea carbinolica (strain DSM 2380 / NBRC 103641 / GraBd1) (Pelobacter carbinolicus).